Consider the following 1082-residue polypeptide: MSDSEDSNFSEEEDSERSSEAEEAEVEEDQRSAAGSEKEEEPEEEEEEEEEYDEEEEEEDDDRPPKKPRHGGFILDEADVDDEYEDEDQWEDGAEDILEKEEIEASNIDNVVLDEDRSGARRLQNLWRDQREEELGEYYMKKYAKSSVGETVYGGSDELSDDITQQQLLPGVKDPNLWTVKCKIGEERATAISLMRKFIAYQFTDTPLQIKSVVAPEHVKGYIYVEAYKQTHVKQAIEGVGNLRLGYWNQQMVPIKEMTDVLKVVKEVANLKPKSWVRLKRGIYKDDIAQVDYVEPSQNTISLKMIPRIDYDRIKARMSLKDWFAKRKKFKRPPQRLFDAEKIRSLGGDVASDGDFLIFEGNRYSRKGFLFKSFAMSAVITEGVKPTLSELEKFEDQPEGIDLEVVTESTGKEREHNFQPGDNVEVCEGELINLQGKVLSVDGNKITIMPKHEDLKDMLEFPAQELRKYFKMGDHVKVIAGRFEGDTGLIVRVEENFVILFSDLTMHELKVLPRDLQLCSETASGVDVGGQHEWGELVQLDPRTVGVIVRLERETFQVLNMHGKVVTVRHQAVTQKKDNRFAVALDSDQNNIHVKDIVKVIDGPHSGREGEIRHLYRSFAFLHCKKLVENGGMFVCKARHLVLAGGSKPRDVTNLTVGGFTPMSPRISSPMHPSAEGQHGGFGSPGGMSRGRGRRDNELIGQTVRISQGPYKGYIGVVKDATESTARVELHSTCQTISVDRQRLTTVDSQRPGGMTSTYGRTPMYGSQTPMYGSGSRTPMYGSQTPLQDGSRTPHYGSQTPLHDGSRTPAQSGAWDPNNPNTPSRAEEEYEYAFDDEPTPSPQAYGGTPNPQTPGYPDPSSPQVNPQYNPQTPGTPAMYNTDQFSPYAAPSPQGSYQPSPSPQSYHQVAPSPAGYQNTHSPASYHPTPSPMAYQASPSPSPVGYSPMTPGAPSPGGYNPHTPGSGIEQNSSDWVTTDIQVKVRDTYLDTQIVGQTGVIRSVTGGMCSVYLKDSEKVVSISSEHLEPITPTKNNKVKVILGEDREATGVLLSIDGEDGIIRMDLEDQQIKILNLRFLGKLLEA.

Acidic residues predominate over residues 1 to 28 (MSDSEDSNFSEEEDSERSSEAEEAEVEE). Positions 1 to 88 (MSDSEDSNFS…DVDDEYEDED (88 aa)) are disordered. Phosphoserine occurs at positions 32 and 36. Composition is skewed to acidic residues over residues 38–62 (KEEE…EDDD) and 76–88 (DEAD…EDED). Residue Lys-141 forms a Glycyl lysine isopeptide (Lys-Gly) (interchain with G-Cter in SUMO2) linkage. An interaction with SUPT4H1 and SUPT4H2 region spans residues 174-268 (DPNLWTVKCK…TDVLKVVKEV (95 aa)). Positions 271–304 (LKPKSWVRLKRGIYKDDIAQVDYVEPSQNTISLK) constitute a KOW 1 domain. The interval 311–418 (YDRIKARMSL…STGKEREHNF (108 aa)) is interaction with RNA polymerase II. Residues 326–332 (KRKKFKR) carry the UBR5-degron motif. KOW domains are found at residues 418–449 (FQPG…ITIM) and 470–501 (FKMG…VILF). RNA is bound at residue Lys-577. Positions 592–625 (IHVKDIVKVIDGPHSGREGEIRHLYRSFAFLHCK) constitute a KOW 4 domain. A DNA-binding site is contributed by Arg-617. Thr-661 carries the post-translational modification Phosphothreonine. Phosphoserine is present on residues Ser-664 and Ser-684. The segment at 669 to 694 (SPMHPSAEGQHGGFGSPGGMSRGRGR) is disordered. The segment covering 678–690 (QHGGFGSPGGMSR) has biased composition (gly residues). An asymmetric dimethylarginine; alternate mark is found at Arg-690 and Arg-692. Omega-N-methylarginine; alternate occurs at positions 690 and 692. Arg-692 carries the symmetric dimethylarginine; alternate modification. In terms of domain architecture, KOW 5 spans 698-731 (ELIGQTVRISQGPYKGYIGVVKDATESTARVELH). Lys-712 carries the post-translational modification N6-acetyllysine. The span at 741–801 (RQRLTTVDSQ…RTPHYGSQTP (61 aa)) shows a compositional bias: polar residues. The segment at 741 to 972 (RQRLTTVDSQ…GSGIEQNSSD (232 aa)) is disordered. Residues 748–753 (DSQRPG) form a CTR1-1; approximate repeat. Positions 748–811 (DSQRPGGMTS…LHDGSRTPAQ (64 aa)) are 9 X 7 AA approximate tandem repeats of G-S-[QR]-T-P-X-[YQ], motif CTR1. A CTR1-2 repeat occupies 754 to 759 (GMTSTY). The CTR1-3 repeat unit spans residues 760-765 (GRTPMY). The stretch at 766–772 (GSQTPMY) is one CTR1-4 repeat. Phosphothreonine; by CDK9 occurs at positions 769 and 778. Residues 775-781 (GSRTPMY) form a CTR1-5 repeat. A CTR1-6 repeat occupies 782 to 788 (GSQTPLQ). Phosphoserine is present on Ser-783. Phosphothreonine is present on residues Thr-785 and Thr-793. The stretch at 790-796 (GSRTPHY) is one CTR1-7 repeat. The CTR1-8 repeat unit spans residues 797 to 803 (GSQTPLH). The residue at position 798 (Ser-798) is a Phosphoserine. Residues Thr-800 and Thr-808 each carry the phosphothreonine modification. Residues 805–811 (GSRTPAQ) form a CTR1-9 repeat. Acidic residues predominate over residues 828-838 (EEYEYAFDDEP). The CTR2-1 repeat unit spans residues 838–845 (PTPSPQAY). Residues 838–944 (PTPSPQAYGG…ASPSPSPVGY (107 aa)) form a 10 X 8 AA approximate tandem repeats of P-[TS]-P-S-P-[QA]-[SG]-Y, motif CTR2 region. Residues 848–856 (TPNPQTPGY) form a CTR2-2; approximate repeat. Over residues 851–860 (PQTPGYPDPS) the composition is skewed to pro residues. Residues 857–863 (PDPSSPQ) form a CTR2-3; approximate repeat. The span at 861-884 (SPQVNPQYNPQTPGTPAMYNTDQF) shows a compositional bias: polar residues. The CTR2-4; half-length repeat unit spans residues 875-879 (TPAMY). One copy of the CTR2-5; approximate repeat lies at 890-896 (PSPQGSY). Over residues 890–905 (PSPQGSYQPSPSPQSY) the composition is skewed to low complexity. One copy of the CTR2-6 repeat lies at 898–905 (PSPSPQSY). The CTR2-7; approximate repeat unit spans residues 910-915 (PSPAGY). A CTR2-8 repeat occupies 918 to 924 (THSPASY). The stretch at 926–933 (PTPSPMAY) is one CTR2-9 repeat. The CTR2-10 repeat unit spans residues 937–944 (PSPSPVGY). A Phosphothreonine modification is found at Thr-1028. A Glycyl lysine isopeptide (Lys-Gly) (interchain with G-Cter in SUMO2) cross-link involves residue Lys-1031.

It belongs to the SPT5 family. Interacts with SUPT4H1 to form DSIF. DSIF interacts with the positive transcription elongation factor b complex (P-TEFb complex), which is composed of CDK9 and cyclin-T (CCNT1 or CCNT2). DSIF interacts with RNA polymerase II, and this interaction is reduced by phosphorylation of the C-terminal domain (CTD) of POLR2A by P-TEFb. DSIF also interacts with the NELF complex, which is composed of NELFA, NELFB, NELFD and NELFE, and this interaction occurs following prior binding of DSIF to RNA polymerase II. Also interacts with PRMT1/HRMT1L2, HTATSF1/TATSF1, RNGTT/CAP1A, PRMT5/SKB1, SUPT6H, and can interact with PIN1. Component of a complex which is at least composed of HTATSF1/Tat-SF1, the P-TEFb complex components CDK9 and CCNT1, RNA polymerase II, SUPT5H, and NCL/nucleolin. Interacts with MCM3AP. Post-translationally, methylated by PRMT1/HRMT1L2 and PRMT5/SKB1. Methylation negatively regulates interaction with P-TEFb and RNA polymerase II. In terms of processing, phosphorylated by CDK7 and CDK9. Phosphorylation by P-TEFb (CDK9) at Thr residues of the C-terminal repeats alleviates transcriptional pausing and promotes transcription elongation. Dephosphorylated by the INTAC complex when transcripts are unfavorably configured for transcriptional elongation, leading to premature transcription termination: dephosphorylation is mediated by the PPP2CA component of the INTAC complex. Dephosphorylated by the PNUTS-PP1 complex in termination zones downstream of poly(A) sites, thereby promoting deceleration of RNA polymerase II transcription. Dephosphorylated by the PNUTS-PP1 complex in termination zones downstream of poly(A) sites, thereby promoting deceleration of RNA polymerase II transcription. Phosphorylation may also stimulate interaction with PIN1. Bulk phosphorylation occurs predominantly in mitosis. Ubiquitinated by UBR5 when not assembled in the DSIF complex, leading to its degradation: UBR5 recognizes and binds a degron that is not accessible when SUPT5H is part of the DSIF complex.

The protein resides in the nucleus. Its function is as follows. Component of the DRB sensitivity-inducing factor complex (DSIF complex), which regulates mRNA processing and transcription elongation by RNA polymerase II. DSIF positively regulates mRNA capping by stimulating the mRNA guanylyltransferase activity of RNGTT/CAP1A. DSIF also acts cooperatively with the negative elongation factor complex (NELF complex) to enhance transcriptional pausing at sites proximal to the promoter. Transcriptional pausing may facilitate the assembly of an elongation competent RNA polymerase II complex. DSIF and NELF promote pausing by inhibition of the transcription elongation factor TFIIS/S-II. TFIIS/S-II binds to RNA polymerase II at transcription pause sites and stimulates the weak intrinsic nuclease activity of the enzyme. Cleavage of blocked transcripts by RNA polymerase II promotes the resumption of transcription from the new 3' terminus and may allow repeated attempts at transcription through natural pause sites. Following phosphorylation by CDK9, DSIF can also positively regulate transcriptional elongation. This Mus musculus (Mouse) protein is Transcription elongation factor SPT5 (Supt5h).